We begin with the raw amino-acid sequence, 315 residues long: Protein sprouty homolog 2 (315 aa).

Residues 1–14 (MEARAQSGSGSQPL) are compositionally biased toward polar residues. Disordered regions lie at residues 1-38 (MEAR…PQQV) and 51-140 (NTNE…GSSF). Over residues 20-32 (DSGRQRGEPDPRD) the composition is skewed to basic and acidic residues. Over residues 88-100 (PRQPSRPQHPPAH) the composition is skewed to pro residues. Low complexity predominate over residues 109 to 140 (RSISTVSSGSRSSTRTSTSSSSSEQRLLGSSF). Residues 118–315 (SRSSTRTSTS…VPPRNFEKPT (198 aa)) are required for interaction with CAV1. Positions 177 to 291 (KCEDCGKCKC…CYDRVNRPGC (115 aa)) constitute an SPR domain. Residues 178-315 (CEDCGKCKCK…VPPRNFEKPT (138 aa)) are required for interaction with TESK1.

It belongs to the sprouty family. As to quaternary structure, forms heterodimers with SPRY1. Forms a tripartite complex containing GAB1, METTL13 and SPRY2. Within the complex interacts with METTL13. Interacts with RAF1. Interacts (via C-terminus) with TESK1 (via C-terminus); the interaction disrupts SPRY2 interaction with GRB2, potentially via disruption of SPRY2 serine dephosphorylation. Interacts with PPP2R1A/PP2A-A and PPP2CA/PP2A-C; the interaction with PPP2CA/PP2A-C is inhibited by interaction with TESK1, possibly by vesicular sequestration of SPRY2. Inhibition of the interaction with the serine/threonine-protein phosphatase 2A (PP2A) holoenzyme results in loss of PP2A-mediated dephosphorylation, resulting in the loss of SPRY2 interaction with GRB2. Interacts with GRB2. Interacts with CBL/C-CBL; the interaction inhibits CBL-mediated ubiquitination of EGFR. Interacts (via C-terminus) with CAV1 (via C-terminus). Post-translationally, cleaved at Pro-144 by the prolyl endopeptidase FAP (seprase) activity (in vitro).

The protein resides in the cytoplasm. It localises to the cytoskeleton. It is found in the cell projection. The protein localises to the ruffle membrane. Antagonist of fibroblast growth factor (FGF) pathways via inhibition of FGF-mediated phosphorylation of ERK1/2. Thereby acts as an antagonist of FGF-induced retinal lens fiber differentiation, may inhibit limb bud outgrowth and may negatively modulate respiratory organogenesis. Inhibits TGFB-induced epithelial-to-mesenchymal transition in retinal lens epithelial cells. Inhibits CBL/C-CBL-mediated EGFR ubiquitination. The polypeptide is Protein sprouty homolog 2 (SPRY2) (Bos taurus (Bovine)).